A 36-amino-acid chain; its full sequence is Cytochrome b6-f complex subunit 7 (36 aa).

The chain crosses the membrane as a helical span at residues 9 to 29 (NGAFIMIGLTLLGLAWGFVII).

Belongs to the PetM family. As to quaternary structure, the 4 large subunits of the cytochrome b6-f complex are cytochrome b6, subunit IV (17 kDa polypeptide, PetD), cytochrome f and the Rieske protein, while the 4 small subunits are PetG, PetL, PetM and PetN. The complex functions as a dimer.

It localises to the cellular thylakoid membrane. Its function is as follows. Component of the cytochrome b6-f complex, which mediates electron transfer between photosystem II (PSII) and photosystem I (PSI), cyclic electron flow around PSI, and state transitions. This Synechocystis sp. (strain ATCC 27184 / PCC 6803 / Kazusa) protein is Cytochrome b6-f complex subunit 7.